The primary structure comprises 304 residues: MDKLPCNELNQVRKAPHAAIGPVLIEALPYIRKFEGKTFVIKYGGAAMKDACLKNSFAQNVTLLRKVGIRIVLVHGGGDAITKTAEKLGITSRFLHGRRVTDKEMISVIQMTLAGKVNQDIVQLISEHGGKAVGVTGLDADTIKALPHPNAETLGLVGEVEQINTAYIDLLCRAGLIPVIAPIGFDDKGNVYNINADDAASSIAIALKAEKLIYVSDVEGIHVGERILKTICKTEAADFIEQGIISGGMIPKVLSAFKTLDSGVGKIHLIDGKATHSLLLEIFTHEGVGTQFIAEQDSDQSQNR.

Substrate-binding positions include 77–78, Arg99, and Asn193; that span reads GG.

The protein belongs to the acetylglutamate kinase family. ArgB subfamily.

The protein localises to the cytoplasm. The catalysed reaction is N-acetyl-L-glutamate + ATP = N-acetyl-L-glutamyl 5-phosphate + ADP. It participates in amino-acid biosynthesis; L-arginine biosynthesis; N(2)-acetyl-L-ornithine from L-glutamate: step 2/4. Functionally, catalyzes the ATP-dependent phosphorylation of N-acetyl-L-glutamate. The polypeptide is Acetylglutamate kinase (Pelodictyon phaeoclathratiforme (strain DSM 5477 / BU-1)).